The sequence spans 556 residues: Formate--tetrahydrofolate ligase 1 (556 aa).

65-72 (TPAGEGKT) is a binding site for ATP.

Belongs to the formate--tetrahydrofolate ligase family.

It carries out the reaction (6S)-5,6,7,8-tetrahydrofolate + formate + ATP = (6R)-10-formyltetrahydrofolate + ADP + phosphate. The protein operates within one-carbon metabolism; tetrahydrofolate interconversion. In Desulfitobacterium hafniense (strain Y51), this protein is Formate--tetrahydrofolate ligase 1.